Reading from the N-terminus, the 316-residue chain is Ribosomal RNA small subunit methyltransferase H (316 aa).

S-adenosyl-L-methionine is bound by residues 36–38, Asp56, Phe83, Asp104, and Gln111; that span reads GGH.

Belongs to the methyltransferase superfamily. RsmH family.

It is found in the cytoplasm. It carries out the reaction cytidine(1402) in 16S rRNA + S-adenosyl-L-methionine = N(4)-methylcytidine(1402) in 16S rRNA + S-adenosyl-L-homocysteine + H(+). Its function is as follows. Specifically methylates the N4 position of cytidine in position 1402 (C1402) of 16S rRNA. The protein is Ribosomal RNA small subunit methyltransferase H of Protochlamydia amoebophila (strain UWE25).